The chain runs to 156 residues: Putative HTH-type transcriptional regulator YffB (156 aa).

An HTH rrf2-type domain is found at 2–137 (KLSSGWEQSV…SNVSLAQVAD (136 aa)).

The chain is Putative HTH-type transcriptional regulator YffB (yffB) from Lactococcus lactis subsp. lactis (strain IL1403) (Streptococcus lactis).